The sequence spans 569 residues: 3-(3-hydroxy-phenyl)propionate/3-hydroxycinnamic acid hydroxylase (569 aa).

Residues 8 to 37 (DVVI…VVDE) and 273 to 283 (FREGRLMLAGD) contribute to the FAD site.

Belongs to the PheA/TfdB FAD monooxygenase family. FAD serves as cofactor.

It catalyses the reaction 3-(3-hydroxyphenyl)propanoate + NADH + O2 + H(+) = 3-(2,3-dihydroxyphenyl)propanoate + NAD(+) + H2O. The enzyme catalyses (2E)-3-(3-hydroxyphenyl)prop-2-enoate + NADH + O2 + H(+) = (2E)-3-(2,3-dihydroxyphenyl)prop-2-enoate + NAD(+) + H2O. Its pathway is aromatic compound metabolism; 3-phenylpropanoate degradation. Catalyzes the insertion of one atom of molecular oxygen into position 2 of the phenyl ring of 3-(3-hydroxyphenyl)propionate (3-HPP) and hydroxycinnamic acid (3HCI). The sequence is that of 3-(3-hydroxy-phenyl)propionate/3-hydroxycinnamic acid hydroxylase from Mycolicibacterium gilvum (strain PYR-GCK) (Mycobacterium gilvum (strain PYR-GCK)).